A 541-amino-acid polypeptide reads, in one-letter code: Glucose-6-phosphate isomerase (541 aa).

The active-site Proton donor is glutamate 346. Residues histidine 377 and lysine 506 contribute to the active site.

It belongs to the GPI family.

Its subcellular location is the cytoplasm. The enzyme catalyses alpha-D-glucose 6-phosphate = beta-D-fructose 6-phosphate. It participates in carbohydrate biosynthesis; gluconeogenesis. The protein operates within carbohydrate degradation; glycolysis; D-glyceraldehyde 3-phosphate and glycerone phosphate from D-glucose: step 2/4. Catalyzes the reversible isomerization of glucose-6-phosphate to fructose-6-phosphate. The protein is Glucose-6-phosphate isomerase of Agrobacterium fabrum (strain C58 / ATCC 33970) (Agrobacterium tumefaciens (strain C58)).